The primary structure comprises 700 residues: Tectonic-2 (700 aa).

Residues 1-25 form the signal peptide; the sequence is MGSLSPLSFLWGLLLLQGVLRPLRG. Residues 26-665 are Extracellular-facing; the sequence is DPVFIPPFIR…YYQGEPRPQC (640 aa). Asn-76, Asn-82, Asn-146, Asn-156, and Asn-389 each carry an N-linked (GlcNAc...) asparagine glycan. A helical transmembrane segment spans residues 666-682; it reads VAKGLMLLSLLMLAILL. Over 683–700 the chain is Cytoplasmic; sequence RHPWVGMCKAWSSASIQH.

The protein belongs to the tectonic family. Part of the tectonic-like complex (also named B9 complex).

It is found in the membrane. The protein resides in the cytoplasm. Its subcellular location is the cytoskeleton. It localises to the cilium basal body. Component of the tectonic-like complex, a complex localized at the transition zone of primary cilia and acting as a barrier that prevents diffusion of transmembrane proteins between the cilia and plasma membranes. Required for hedgehog signaling transduction. The protein is Tectonic-2 (Tctn2) of Rattus norvegicus (Rat).